We begin with the raw amino-acid sequence, 262 residues long: Serine O-acetyltransferase (262 aa).

Cys-107 serves as the catalytic Acyl-thioester intermediate. Lys-128 provides a ligand contact to substrate. The active-site Proton acceptor is His-200. Residue Glu-202 is part of the active site. Arg-214 is a binding site for substrate.

It belongs to the MetA family.

Its subcellular location is the cytoplasm. It catalyses the reaction L-serine + acetyl-CoA = O-acetyl-L-serine + CoA. The catalysed reaction is L-homoserine + acetyl-CoA = O-acetyl-L-homoserine + CoA. It participates in amino-acid biosynthesis; L-cysteine biosynthesis; L-cysteine from L-serine: step 1/2. Functionally, transfers an acetyl group from acetyl-CoA to L-serine, forming acetyl-L-serine. In vitro, also has homoserine acetyl transferase activity. The chain is Serine O-acetyltransferase from Lactobacillus acidophilus.